Here is a 210-residue protein sequence, read N- to C-terminus: Glycerol-3-phosphate acyltransferase (210 aa).

6 consecutive transmembrane segments (helical) span residues 8–28, 56–76, 87–107, 119–139, 144–164, and 165–185; these read LILL…LLLT, GLAA…VLIA, TMAV…WLGF, TIWV…LLVA, ISSA…VLLS, and GRPL…LIWA.

The protein belongs to the PlsY family. In terms of assembly, probably interacts with PlsX.

Its subcellular location is the cell inner membrane. The enzyme catalyses an acyl phosphate + sn-glycerol 3-phosphate = a 1-acyl-sn-glycero-3-phosphate + phosphate. It functions in the pathway lipid metabolism; phospholipid metabolism. Catalyzes the transfer of an acyl group from acyl-phosphate (acyl-PO(4)) to glycerol-3-phosphate (G3P) to form lysophosphatidic acid (LPA). This enzyme utilizes acyl-phosphate as fatty acyl donor, but not acyl-CoA or acyl-ACP. The chain is Glycerol-3-phosphate acyltransferase from Gluconobacter oxydans (strain 621H) (Gluconobacter suboxydans).